The sequence spans 234 residues: MRSGEELDGFEGEASSTSMISGASSPYQPTTEPVSQRRGLAGLRCDPDYLRGALGRLKVAQVILALIAFICIETIMACSPCEGLYFFEFVSCSAFVVTGVLLIMFSLNLHMRIPQINWNLTDLVNTGLSAFLFFIASIVLAALNHRAGAEIAAVIFGFLATAAYAVNTFLAVQKWRVSVRQQSTNDYIRARTESRDVDSRPEIQRLDTFSYSTNVTVRKKSPTNLLSLNHWQLA.

Over residues 1-11 (MRSGEELDGFE) the composition is skewed to acidic residues. The segment at 1-38 (MRSGEELDGFEGEASSTSMISGASSPYQPTTEPVSQRR) is disordered. Residues 15-25 (SSTSMISGASS) show a composition bias toward low complexity. Residues 49–176 (YLRGALGRLK…NTFLAVQKWR (128 aa)) form the MARVEL domain. A run of 4 helical transmembrane segments spans residues 59–79 (VAQVILALIAFICIETIMACS), 85–105 (YFFEFVSCSAFVVTGVLLIMF), 123–143 (LVNTGLSAFLFFIASIVLAAL), and 151–171 (IAAVIFGFLATAAYAVNTFLA). The residue at position 194 (serine 194) is a Phosphoserine.

The protein belongs to the chemokine-like factor family. As to quaternary structure, interacts with PD-L1/CD274 and CMTM6. As to expression, highly expressed in testis and prostate.

It is found in the membrane. Acts as a backup for CMTM6 to regulate plasma membrane expression of PD-L1/CD274, an immune inhibitory ligand critical for immune tolerance to self and antitumor immunity. May protect PD-L1/CD274 from being polyubiquitinated and targeted for degradation. The chain is CKLF-like MARVEL transmembrane domain-containing protein 4 from Homo sapiens (Human).